A 247-amino-acid chain; its full sequence is Auxin-responsive protein IAA13 (247 aa).

Positions 14–18 (LELGL) match the EAR-like (transcriptional repression) motif. Gly residues predominate over residues 25–40 (GTAAKIGKSGGGGAWG). 2 disordered regions span residues 25–44 (GTAA…ERGR) and 49–119 (KDFP…PKDV). Residues 62–75 (SASHAGSSPPRSSS) are compositionally biased toward low complexity. Polar residues predominate over residues 87 to 98 (RMNSLVNNQATK). Basic and acidic residues predominate over residues 106-119 (AGKKKVKDDEPKDV). Residues 129–225 (VGFIKVNMDG…SVKRLRVMKT (97 aa)) enclose the PB1 domain.

The protein belongs to the Aux/IAA family. In terms of assembly, homodimers and heterodimers. Interacts with TPL. In terms of tissue distribution, preferentially expressed in stems.

It localises to the nucleus. In terms of biological role, aux/IAA proteins are short-lived transcriptional factors that function as repressors of early auxin response genes at low auxin concentrations. Repression is thought to result from the interaction with auxin response factors (ARFs), proteins that bind to the auxin-responsive promoter element (AuxRE). Formation of heterodimers with ARF proteins may alter their ability to modulate early auxin response genes expression. This chain is Auxin-responsive protein IAA13 (IAA13), found in Arabidopsis thaliana (Mouse-ear cress).